Consider the following 84-residue polypeptide: Toxin Acra3 (84 aa).

The first 17 residues, 1-17, serve as a signal peptide directing secretion; that stretch reads MKIIFLVLMMILSEVYS. Residues 19 to 82 enclose the LCN-type CS-alpha/beta domain; it reads RDGYPVHDGT…VYGDDGIFCK (64 aa). Intrachain disulfides connect Cys-30-Cys-81, Cys-34-Cys-57, Cys-43-Cys-62, and Cys-47-Cys-64. Ser-83 carries the post-translational modification Serine amide.

It belongs to the long (4 C-C) scorpion toxin superfamily. Sodium channel inhibitor family. Beta subfamily. As to expression, expressed by the venom gland.

It is found in the secreted. Functionally, toxin with unknown target. In vivo, induces severe neurotoxic events in mice such as excitability and convulsions, leading to the death of the animals within a few minutes after injection. Exerts very strong cytotoxic effect on a mouse brain tumor cell line (BC3H1) (IC(50)=5 mg/ml). It exerts its effects by inducing a stronger necrosis than apoptosis in BC3H1 cells. The polypeptide is Toxin Acra3 (Androctonus crassicauda (Arabian fat-tailed scorpion)).